The chain runs to 247 residues: Protein McbF (247 aa).

Residues 6-234 enclose the ABC transporter domain; sequence LEINSLSFSY…NNETTQKRHL (229 aa). 40-47 serves as a coordination point for ATP; that stretch reads GENPAGKT.

This sequence belongs to the ABC transporter superfamily.

In terms of biological role, together with two further proteins McbE and McbG this protein causes immunity to the peptide antibiotic microcin B17, which inhibits DNA replication in enterobacteriaceae. Immunity is determined by two different mechanisms. McbE is involved in the production of extracellular MccB17 and, in a complex with mcbf it also serves as 'pump' for the export of active MccB17 from the cytoplasm to the periplasmic space. This is Protein McbF (mcbF) from Escherichia coli.